We begin with the raw amino-acid sequence, 42 residues long: Pelovaterin (42 aa).

Disulfide bonds link Cys8-Cys38, Cys16-Cys32, and Cys24-Cys39.

The protein localises to the secreted. The protein resides in the extracellular space. It localises to the extracellular matrix. Functionally, induces the nucleation and stabilization of vaterite, one of the crystalline polymorphs of calcium carbonate. Exhibits strong antimicrobial activity against Pseudomonas aeruginosa and Proteus vulgaris. The chain is Pelovaterin from Pelodiscus sinensis (Chinese softshell turtle).